The following is a 666-amino-acid chain: uncharacterized protein (666 aa).

This sequence belongs to the MG032/MG096/MG288 family.

This is an uncharacterized protein from Mycoplasma genitalium (strain ATCC 33530 / DSM 19775 / NCTC 10195 / G37) (Mycoplasmoides genitalium).